The chain runs to 157 residues: Phosphopantetheine adenylyltransferase (157 aa).

Ser9 contacts substrate. ATP contacts are provided by residues Ser9 to Phe10 and His17. Residues Lys41, Thr73, and Arg87 each coordinate substrate. ATP is bound by residues Gly88–Arg90, Glu98, and Tyr122–Ser128.

It belongs to the bacterial CoaD family. Homohexamer. The cofactor is Mg(2+).

Its subcellular location is the cytoplasm. It carries out the reaction (R)-4'-phosphopantetheine + ATP + H(+) = 3'-dephospho-CoA + diphosphate. The protein operates within cofactor biosynthesis; coenzyme A biosynthesis; CoA from (R)-pantothenate: step 4/5. Functionally, reversibly transfers an adenylyl group from ATP to 4'-phosphopantetheine, yielding dephospho-CoA (dPCoA) and pyrophosphate. The polypeptide is Phosphopantetheine adenylyltransferase (Oenococcus oeni (strain ATCC BAA-331 / PSU-1)).